The chain runs to 335 residues: Probable phosphoglycerate mutase ARB_03491 (335 aa).

The N-terminal stretch at 1 to 24 (MAGRILLGLTLLATSLPLLAMGDA) is a signal peptide. H108 serves as the catalytic Tele-phosphohistidine intermediate. Catalysis depends on E211, which acts as the Proton donor/acceptor.

The protein belongs to the phosphoglycerate mutase family.

The protein resides in the secreted. In terms of biological role, probable phosphomutase that may have a function related to the manipulation of phosphate groups on carbohydrates. The polypeptide is Probable phosphoglycerate mutase ARB_03491 (Arthroderma benhamiae (strain ATCC MYA-4681 / CBS 112371) (Trichophyton mentagrophytes)).